The primary structure comprises 442 residues: Protein phosphatase 2C 3 (442 aa).

Positions 30-100 are disordered; sequence RFRMSPSEMN…VSISDGNSSV (71 aa). A compositionally biased stretch (acidic residues) spans 79-90; sequence PEEESVSLEDSD. One can recognise a PPM-type phosphatase domain in the interval 120 to 433; the sequence is RYGVASVCGR…DNVSVVVIDL (314 aa). Residues D162, G163, and D339 each coordinate Mn(2+). The disordered stretch occupies residues 363 to 401; it reads GRGRRRGETQTPGRRSEEEGKEEEEKVVGSRKNGKRGEI. Basic and acidic residues predominate over residues 376-390; it reads RRSEEEGKEEEEKVV. D424 contacts Mn(2+).

This sequence belongs to the PP2C family. As to quaternary structure, part of a K(+)-channel calcium-sensing kinase/phosphatase complex composed by a calcium sensor CBL (CBL1, CBL2, CBL3 or CBL9), a kinase CIPK (CIPK6, CIPK16 or CIPK23), a phosphatase PP2C (AIP1) and a K(+)-channel (AKT1). Interacts with AKT1 and CIPK23. Interacts with PYL8/RCAR3 in an abscisic acid-independent. Interacts with PYR1/RCAR11 in an abscisic acid-dependent manner. Requires Mg(2+) as cofactor. It depends on Mn(2+) as a cofactor. As to expression, expressed in shoot meristem, vascular tissues of cotyledons, and in primary roots surrounding the root meristem. Highly expressed in seeds.

The protein localises to the cell membrane. The protein resides in the cytoplasm. Its subcellular location is the nucleus. It catalyses the reaction O-phospho-L-seryl-[protein] + H2O = L-seryl-[protein] + phosphate. The enzyme catalyses O-phospho-L-threonyl-[protein] + H2O = L-threonyl-[protein] + phosphate. In terms of biological role, involved in the negative regulation of the K(+) potassium channel AKT1 by its dephosphorylation, antagonistically to CIPK proteins (e.g. CIPK23). Functions as a positive regulator of abscisic acid-mediated cell signaling during seedling growth. Involved in the regulation of seed dormancy. Acts as a negative regulator of seed dormancy by inhibiting abscisic signaling and subsequently activating gibberellic acid signaling. In Arabidopsis thaliana (Mouse-ear cress), this protein is Protein phosphatase 2C 3.